Consider the following 272-residue polypeptide: NADPH-dependent 7-cyano-7-deazaguanine reductase (272 aa).

Residue 82–84 coordinates substrate; the sequence is IES. NADPH is bound at residue 84–85; that stretch reads SK. The active-site Thioimide intermediate is the C178. The Proton donor role is filled by D185. 217 to 218 is a substrate binding site; it reads HE. 246–247 serves as a coordination point for NADPH; sequence RG.

Belongs to the GTP cyclohydrolase I family. QueF type 2 subfamily. In terms of assembly, homodimer.

It localises to the cytoplasm. The catalysed reaction is 7-aminomethyl-7-carbaguanine + 2 NADP(+) = 7-cyano-7-deazaguanine + 2 NADPH + 3 H(+). The protein operates within tRNA modification; tRNA-queuosine biosynthesis. In terms of biological role, catalyzes the NADPH-dependent reduction of 7-cyano-7-deazaguanine (preQ0) to 7-aminomethyl-7-deazaguanine (preQ1). This is NADPH-dependent 7-cyano-7-deazaguanine reductase from Stenotrophomonas maltophilia (strain K279a).